Reading from the N-terminus, the 220-residue chain is Claudin-24 (220 aa).

The Cytoplasmic segment spans residues 1-10 (MALIFRTAMQ). Residues 11–31 (SVGLLLSLLGWILSIITTYLP) traverse the membrane as a helical segment. The Extracellular portion of the chain corresponds to 32–81 (HWKNLNLDLNEMENWTMGLWQTCVIQEEVGMQCKDFDSFLALPAELRVSR). The chain crosses the membrane as a helical span at residues 82 to 102 (ILMFLSNGLGFLGLLVSGFGL). At 103 to 117 (DCLRIGESQRDLKRR) the chain is on the cytoplasmic side. The helical transmembrane segment at 118-138 (LLILGGILSWASGITALVPVS) threads the bilayer. Residues 139–161 (WVAHKTVQEFWDENVPDFVPRWE) lie on the Extracellular side of the membrane. Residues 162–182 (FGEALFLGWFAGLSLLLGGCL) form a helical membrane-spanning segment. Residues 183 to 220 (LNCAACSSHAPLALGHYAVAQMQTQCPYLEDGTADPQV) are Cytoplasmic-facing.

This sequence belongs to the claudin family.

It localises to the cell junction. The protein resides in the tight junction. The protein localises to the cell membrane. Its function is as follows. Plays a major role in tight junction-specific obliteration of the intercellular space, through calcium-independent cell-adhesion activity. The protein is Claudin-24 of Homo sapiens (Human).